Consider the following 108-residue polypeptide: DIVMTQTPLSLSVSPGEPASISCRSSQSNLDYLNWYLQKAGQSPRLLPEQDSQRASGVPDRFSGSGSGTDFTLRIGRVEAEDAGIYYCMQRSFYPYTFGQGTRLEVRR.

The framework-1 stretch occupies residues Asp1 to Cys23. Cysteines 23 and 88 form a disulfide. Residues Arg24–Asn34 form a complementarity-determining-1 region. The framework-2 stretch occupies residues Trp35–Glu49. Positions Pro44–Gly66 are disordered. The tract at residues Gln50–Ser56 is complementarity-determining-2. Residues Gly57–Cys88 form a framework-3 region. Residues Met89 to Thr97 are complementarity-determining-3. Positions Phe98–Arg107 are framework-4.

The sequence is that of Ig kappa chain V region GOM from Canis lupus familiaris (Dog).